A 455-amino-acid polypeptide reads, in one-letter code: Maintenance of telomere capping protein 1 (455 aa).

Disordered regions lie at residues 1-113 (MAET…SATP) and 296-317 (AKKM…EDAS). Residues 27–38 (PTSKEFNNDDSK) show a composition bias toward basic and acidic residues. Positions 80–113 (VAATSNERQQHDASNQPSQAAQTTINKNTESATP) are enriched in polar residues. The segment covering 296–305 (AKKMNKENKQ) has biased composition (basic and acidic residues).

This sequence belongs to the MTC1 family.

The protein localises to the cytoplasm. In terms of biological role, involved in telomere capping. The sequence is that of Maintenance of telomere capping protein 1 from Schizosaccharomyces pombe (strain 972 / ATCC 24843) (Fission yeast).